Consider the following 278-residue polypeptide: Indole-3-glycerol phosphate synthase (278 aa).

It belongs to the TrpC family.

It carries out the reaction 1-(2-carboxyphenylamino)-1-deoxy-D-ribulose 5-phosphate + H(+) = (1S,2R)-1-C-(indol-3-yl)glycerol 3-phosphate + CO2 + H2O. It functions in the pathway amino-acid biosynthesis; L-tryptophan biosynthesis; L-tryptophan from chorismate: step 4/5. The sequence is that of Indole-3-glycerol phosphate synthase from Pseudomonas fluorescens (strain Pf0-1).